The following is a 197-amino-acid chain: Probable chorismate pyruvate-lyase (197 aa).

The span at Met-1–Pro-14 shows a compositional bias: basic and acidic residues. The interval Met-1–Trp-25 is disordered. 3 residues coordinate substrate: Arg-73, Leu-111, and Glu-173.

This sequence belongs to the UbiC family.

The protein localises to the cytoplasm. The enzyme catalyses chorismate = 4-hydroxybenzoate + pyruvate. It functions in the pathway cofactor biosynthesis; ubiquinone biosynthesis. Its function is as follows. Removes the pyruvyl group from chorismate, with concomitant aromatization of the ring, to provide 4-hydroxybenzoate (4HB) for the ubiquinone pathway. The polypeptide is Probable chorismate pyruvate-lyase (Burkholderia thailandensis (strain ATCC 700388 / DSM 13276 / CCUG 48851 / CIP 106301 / E264)).